We begin with the raw amino-acid sequence, 481 residues long: GTPase Obg (481 aa).

The Obg domain occupies 2–159 (TTFVDRVVLH…LDAVLELKSV (158 aa)). The 171-residue stretch at 160–330 (ADIGLVGYPS…LMFAMGELVA (171 aa)) folds into the OBG-type G domain. Residues 166-173 (GYPSAGKS), 191-195 (FTTLV), 212-215 (DVPG), 282-285 (NKID), and 311-313 (SAA) each bind GTP. Residues Ser173 and Thr193 each coordinate Mg(2+). The OCT domain maps to 348–426 (PKAVDDAGFT…IGEREFDWHP (79 aa)). The segment at 440 to 481 (DQRLAEKTQRPSAAERLAARKARRQRPGDEPESDELDGDSGE) is disordered. Acidic residues predominate over residues 469 to 481 (EPESDELDGDSGE).

It belongs to the TRAFAC class OBG-HflX-like GTPase superfamily. OBG GTPase family. In terms of assembly, monomer. Mg(2+) serves as cofactor.

The protein resides in the cytoplasm. Its function is as follows. An essential GTPase which binds GTP, GDP and possibly (p)ppGpp with moderate affinity, with high nucleotide exchange rates and a fairly low GTP hydrolysis rate. Plays a role in control of the cell cycle, stress response, ribosome biogenesis and in those bacteria that undergo differentiation, in morphogenesis control. The protein is GTPase Obg of Salinispora arenicola (strain CNS-205).